The primary structure comprises 311 residues: Malate dehydrogenase (311 aa).

10 to 15 (GAGHTG) lines the NAD(+) pocket. Positions 85 and 91 each coordinate substrate. NAD(+) contacts are provided by residues Asn98 and 121 to 123 (LTN). 2 residues coordinate substrate: Asn123 and Arg154. His178 acts as the Proton acceptor in catalysis.

Belongs to the LDH/MDH superfamily. MDH type 3 family.

The catalysed reaction is (S)-malate + NAD(+) = oxaloacetate + NADH + H(+). In terms of biological role, catalyzes the reversible oxidation of malate to oxaloacetate. The chain is Malate dehydrogenase from Staphylococcus carnosus (strain TM300).